The following is a 667-amino-acid chain: Long-chain-fatty-acid--CoA ligase ACSBG2 (667 aa).

Residues 1–14 (MTQEKKAEDPDRGM) are compositionally biased toward basic and acidic residues. Positions 1–20 (MTQEKKAEDPDRGMDTTSAA) are disordered. Residues 227–235 (TSGTTGSPK), 418–423 (EIYGMT), Asp-496, Arg-511, and Arg-624 each bind ATP.

The protein belongs to the ATP-dependent AMP-binding enzyme family. Bubblegum subfamily.

Its subcellular location is the cytoplasm. It is found in the membrane. It catalyses the reaction a long-chain fatty acid + ATP + CoA = a long-chain fatty acyl-CoA + AMP + diphosphate. The catalysed reaction is (5Z,8Z,11Z,14Z)-eicosatetraenoate + ATP + CoA = (5Z,8Z,11Z,14Z)-eicosatetraenoyl-CoA + AMP + diphosphate. It carries out the reaction hexadecanoate + ATP + CoA = hexadecanoyl-CoA + AMP + diphosphate. The enzyme catalyses (9Z)-octadecenoate + ATP + CoA = (9Z)-octadecenoyl-CoA + AMP + diphosphate. It catalyses the reaction (9Z,12Z)-octadecadienoate + ATP + CoA = (9Z,12Z)-octadecadienoyl-CoA + AMP + diphosphate. The catalysed reaction is tetracosanoate + ATP + CoA = tetracosanoyl-CoA + AMP + diphosphate. Its function is as follows. Catalyzes the conversion of fatty acids such as long chain and very long-chain fatty acids to their active form acyl-CoAs for both synthesis of cellular lipids, and degradation via beta-oxidation. Can activate diverse saturated, monosaturated and polyunsaturated fatty acids. Has increased ability to activate oleic and linoleic acid. May play a role in spermatogenesis. This is Long-chain-fatty-acid--CoA ligase ACSBG2 from Rattus norvegicus (Rat).